Reading from the N-terminus, the 643-residue chain is Phosphomethylpyrimidine synthase (643 aa).

Substrate-binding positions include asparagine 248, methionine 277, tyrosine 306, histidine 342, 362 to 364 (SRG), 403 to 406 (DGLR), and glutamate 442. Histidine 446 contacts Zn(2+). Tyrosine 469 is a binding site for substrate. Zn(2+) is bound at residue histidine 510. Residues cysteine 590, cysteine 593, and cysteine 598 each contribute to the [4Fe-4S] cluster site.

It belongs to the ThiC family. In terms of assembly, homodimer. Requires [4Fe-4S] cluster as cofactor.

The enzyme catalyses 5-amino-1-(5-phospho-beta-D-ribosyl)imidazole + S-adenosyl-L-methionine = 4-amino-2-methyl-5-(phosphooxymethyl)pyrimidine + CO + 5'-deoxyadenosine + formate + L-methionine + 3 H(+). It functions in the pathway cofactor biosynthesis; thiamine diphosphate biosynthesis. Its function is as follows. Catalyzes the synthesis of the hydroxymethylpyrimidine phosphate (HMP-P) moiety of thiamine from aminoimidazole ribotide (AIR) in a radical S-adenosyl-L-methionine (SAM)-dependent reaction. This Burkholderia cenocepacia (strain HI2424) protein is Phosphomethylpyrimidine synthase.